A 128-amino-acid polypeptide reads, in one-letter code: Small ribosomal subunit protein uS11 (128 aa).

Belongs to the universal ribosomal protein uS11 family. Part of the 30S ribosomal subunit. Interacts with proteins S7 and S18. Binds to IF-3.

Located on the platform of the 30S subunit, it bridges several disparate RNA helices of the 16S rRNA. Forms part of the Shine-Dalgarno cleft in the 70S ribosome. The chain is Small ribosomal subunit protein uS11 from Methylococcus capsulatus (strain ATCC 33009 / NCIMB 11132 / Bath).